We begin with the raw amino-acid sequence, 418 residues long: CinA-like protein (418 aa).

This sequence belongs to the CinA family.

The chain is CinA-like protein from Leptospira borgpetersenii serovar Hardjo-bovis (strain L550).